A 121-amino-acid chain; its full sequence is Basic phospholipase A2 VRV-PL-VIIIa (121 aa).

7 cysteine pairs are disulfide-bonded: Cys26-Cys115, Cys28-Cys44, Cys43-Cys95, Cys49-Cys121, Cys50-Cys88, Cys57-Cys81, and Cys75-Cys86. The Ca(2+) site is built by Tyr27, Gly29, and Gly31. His47 is an active-site residue. Asp48 contributes to the Ca(2+) binding site. Asp89 is a catalytic residue.

This sequence belongs to the phospholipase A2 family. Group II subfamily. D49 sub-subfamily. Monomer. Requires Ca(2+) as cofactor. Expressed by the venom gland.

It is found in the secreted. The enzyme catalyses a 1,2-diacyl-sn-glycero-3-phosphocholine + H2O = a 1-acyl-sn-glycero-3-phosphocholine + a fatty acid + H(+). Oxyphenbutazone (OPB), anisic acid and atropine inhibit the enzymatic activity by binding at the substrate-binding site. P-coumaric acid, resveratrol, spermidine, corticosterone and gramine derivative inhibit the enzymatic activity by binding at the substrate-binding site. Snake venom phospholipase A2 (PLA2) that shows weak neurotoxicity and medium anticoagulant effects by binding to factor Xa (F10) and inhibiting the prothrombinase activity (IC(50) is 130 nM). It also damages vital organs such as lung, liver and kidney, displays edema-inducing activities when injected into the foot pads of mice and induces necrosis of muscle cells when injected into the thigh muscle. Has a low enzymatic activity. PLA2 catalyzes the calcium-dependent hydrolysis of the 2-acyl groups in 3-sn-phosphoglycerides. In Daboia russelii (Russel's viper), this protein is Basic phospholipase A2 VRV-PL-VIIIa.